The primary structure comprises 422 residues: Enolase (422 aa).

Q162 provides a ligand contact to (2R)-2-phosphoglycerate. E204 serves as the catalytic Proton donor. Mg(2+) contacts are provided by D241, E284, and D311. (2R)-2-phosphoglycerate contacts are provided by K336, R365, S366, and K387. Residue K336 is the Proton acceptor of the active site.

This sequence belongs to the enolase family. The cofactor is Mg(2+).

It is found in the cytoplasm. It localises to the secreted. The protein localises to the cell surface. It catalyses the reaction (2R)-2-phosphoglycerate = phosphoenolpyruvate + H2O. The protein operates within carbohydrate degradation; glycolysis; pyruvate from D-glyceraldehyde 3-phosphate: step 4/5. Catalyzes the reversible conversion of 2-phosphoglycerate (2-PG) into phosphoenolpyruvate (PEP). It is essential for the degradation of carbohydrates via glycolysis. This is Enolase from Bartonella tribocorum (strain CIP 105476 / IBS 506).